The following is a 305-amino-acid chain: Acetylglutamate kinase (305 aa).

Substrate-binding positions include 80–81 (GG), R102, and N196.

This sequence belongs to the acetylglutamate kinase family. ArgB subfamily.

It is found in the cytoplasm. The enzyme catalyses N-acetyl-L-glutamate + ATP = N-acetyl-L-glutamyl 5-phosphate + ADP. Its pathway is amino-acid biosynthesis; L-arginine biosynthesis; N(2)-acetyl-L-ornithine from L-glutamate: step 2/4. Its function is as follows. Catalyzes the ATP-dependent phosphorylation of N-acetyl-L-glutamate. This is Acetylglutamate kinase from Chlorobium luteolum (strain DSM 273 / BCRC 81028 / 2530) (Pelodictyon luteolum).